The primary structure comprises 969 residues: Endogenous retrovirus group K member 11 Pol protein (969 aa).

The Reverse transcriptase domain maps to 57–245 (LEKGHIEPSF…TPFHYLGMQI (189 aa)). The LPQG motif lies at 161–164 (LPQG). The region spanning 460–590 (LENALTVFTD…ADLLVSSALI (131 aa)) is the RNase H type-1 domain. Positions 469, 497, 517, and 582 each coordinate Mg(2+). An Integrase-type zinc finger spans residues 587 to 628 (SALIKAQELHALTHVNAAGLKNKFDVTWKQAKDIVQHCTQCQ). Zn(2+) is bound by residues His596, His600, Cys624, and Cys627. Positions 642–803 (RGLCPNALWQ…TSAEQHLTGK (162 aa)) constitute an Integrase catalytic domain. A DNA-binding region (integrase-type) is located at residues 811 to 859 (KLIWWKDNKNKTWEIGKVITWGRGFACVSPGENQLPVWIPTRHLKFYNE).

Belongs to the beta type-B retroviral polymerase family. HERV class-II K(HML-2) pol subfamily.

It catalyses the reaction DNA(n) + a 2'-deoxyribonucleoside 5'-triphosphate = DNA(n+1) + diphosphate. It carries out the reaction Endonucleolytic cleavage to 5'-phosphomonoester.. In terms of biological role, early post-infection, the reverse transcriptase converts the viral RNA genome into double-stranded viral DNA. The RNase H domain of the reverse transcriptase performs two functions. It degrades the RNA template and specifically removes the RNA primer from the RNA/DNA hybrid. Following nuclear import, the integrase catalyzes the insertion of the linear, double-stranded viral DNA into the host cell chromosome. Endogenous Pol proteins may have kept, lost or modified their original function during evolution. This chain is Endogenous retrovirus group K member 11 Pol protein (ERVK-11), found in Homo sapiens (Human).